Consider the following 396-residue polypeptide: L-lactate dehydrogenase (396 aa).

The region spanning 1 to 380 (MIISAASDYR…SGDSLVQELG (380 aa)) is the FMN hydroxy acid dehydrogenase domain. Y24 serves as a coordination point for substrate. S106 and Q127 together coordinate FMN. Y129 contacts substrate. T155 provides a ligand contact to FMN. A substrate-binding site is contributed by R164. K251 is a binding site for FMN. The Proton acceptor role is filled by H275. Residue R278 coordinates substrate. 306–330 (DSGIRNGLDVVRMIALGADTVLLGR) serves as a coordination point for FMN.

The protein belongs to the FMN-dependent alpha-hydroxy acid dehydrogenase family. It depends on FMN as a cofactor.

The protein localises to the cell inner membrane. The enzyme catalyses (S)-lactate + A = pyruvate + AH2. Its function is as follows. Catalyzes the conversion of L-lactate to pyruvate. Is coupled to the respiratory chain. In Salmonella paratyphi A (strain ATCC 9150 / SARB42), this protein is L-lactate dehydrogenase.